The following is a 435-amino-acid chain: Type A flavoprotein fprA (435 aa).

Residues 48–228 (ANGTTYNAYA…PFRSFVAQAL (181 aa)) are zinc metallo-hydrolase. Positions 98, 100, 102, 167, 186, and 243 each coordinate Fe cation. The 140-residue stretch at 276 to 415 (LLIFYVSAYG…EGRAFGRRLA (140 aa)) folds into the Flavodoxin-like domain.

The protein in the N-terminal section; belongs to the zinc metallo-hydrolase group 3 family. As to quaternary structure, homodimer. It depends on FMN as a cofactor. Fe cation serves as cofactor.

In terms of biological role, low-potential electron donor to a number of redox enzymes. The protein is Type A flavoprotein fprA (fprA) of Rhodobacter capsulatus (strain ATCC BAA-309 / NBRC 16581 / SB1003).